The following is a 466-amino-acid chain: Asparagine--tRNA ligase (466 aa).

Belongs to the class-II aminoacyl-tRNA synthetase family. Homodimer.

It localises to the cytoplasm. The enzyme catalyses tRNA(Asn) + L-asparagine + ATP = L-asparaginyl-tRNA(Asn) + AMP + diphosphate + H(+). The protein is Asparagine--tRNA ligase of Salmonella choleraesuis (strain SC-B67).